We begin with the raw amino-acid sequence, 321 residues long: Putative ankyrin repeat domain-containing protein 26-like protein (321 aa).

5 ANK repeats span residues 48–78, 82–111, 115–144, 148–177, and 181–210; these read KHLG…DLDE, KKRT…QLDV, KNRT…DPDL, YGNT…NIES, and DELT…NLTA. Disordered stretches follow at residues 222–242 and 268–321; these read EYKE…GTSN and FNKP…NENI. Residues 229 to 242 are compositionally biased toward polar residues; that stretch reads PRNPQNSNPEGTSN.

This is Putative ankyrin repeat domain-containing protein 26-like protein (ANKRD26P1) from Homo sapiens (Human).